We begin with the raw amino-acid sequence, 318 residues long: L-carnitine dehydrogenase (318 aa).

14–19 (GAGVIG) contacts NAD(+).

Belongs to the 3-hydroxyacyl-CoA dehydrogenase family. L-carnitine dehydrogenase subfamily. In terms of assembly, homodimer.

The protein resides in the cytoplasm. It carries out the reaction carnitine + NAD(+) = 3-dehydrocarnitine + NADH + H(+). The protein operates within amine and polyamine metabolism; carnitine metabolism. In terms of biological role, catalyzes the NAD(+)-dependent oxidation of L-carnitine to 3-dehydrocarnitine. This Streptomyces coelicolor (strain ATCC BAA-471 / A3(2) / M145) protein is L-carnitine dehydrogenase.